The chain runs to 461 residues: uncharacterized protein (461 aa).

The span at 1 to 19 (MEKCSHESGRHSAENDGKY) shows a compositional bias: basic and acidic residues. The tract at residues 1–21 (MEKCSHESGRHSAENDGKYDI) is disordered.

This sequence belongs to the CapA family.

Functionally, could be involved in the biosynthesis of a cell wall component. This is an uncharacterized protein from Sinorhizobium fredii (strain NBRC 101917 / NGR234).